The following is a 3459-amino-acid chain: uncharacterized protein (3459 aa).

A compositionally biased stretch (acidic residues) spans 158-167; sequence NDDDWIFNED. Disordered stretches follow at residues 158-230 and 400-447; these read NDDD…NNNN and YGYI…NDEK. Over residues 168–184 the composition is skewed to basic and acidic residues; that stretch reads DEKKNKNNDGNDNRYDY. A compositionally biased stretch (low complexity) spans 185–201; the sequence is NDLQNNNNNDNNKYDYN. Over residues 204–221 the composition is skewed to basic and acidic residues; that stretch reads DDEKKNKNNDGDDNKYDY. A compositionally biased stretch (acidic residues) spans 406–443; sequence DNDDGDDYNDDNDNDDNYNDDNYNDDNYNDDNYNDDNY. Positions 771–851 form a coiled coil; it reads VNEKKKGENE…NEMNKDEENE (81 aa). Residues 1059 to 1079 traverse the membrane as a helical segment; the sequence is LIYMIYLFFTYKKYDLLLMFI. Disordered regions lie at residues 1148-1187, 1399-1467, and 1711-1733; these read RRQE…NDYD, IPTQ…NDDD, and QKKK…NKEN. Residues 1404 to 1463 show a composition bias toward basic and acidic residues; the sequence is DKNETDEGNKNETDEGDKNETDEGDKNETDEGNKNETEEIYKNETDEGNKNETEEIYKND. 2 helical membrane passes run 2059 to 2079 and 2197 to 2217; these read FLLF…IFFF and IIQC…DFLF. Disordered regions lie at residues 2582-2644 and 2776-2835; these read IYKD…DNNN and GRIW…DKGD. A compositionally biased stretch (acidic residues) spans 2592–2629; it reads DNNDDDNINDDDNINDDDNINDDDNNNDDDNNNDDNND. Positions 2779 to 2821 are enriched in basic and acidic residues; it reads WKREENGEKKKNEKNESEKNERNEKNEKNEKHEKHEKHEKNEK. Positions 2785–2820 form a coiled coil; it reads GEKKKNEKNESEKNERNEKNEKNEKHEKHEKHEKNE. The next 2 helical transmembrane spans lie at 3229–3249 and 3296–3316; these read LFII…SFIL and LLFF…NINS.

The protein localises to the membrane. This is an uncharacterized protein from Plasmodium falciparum (isolate 3D7).